A 540-amino-acid chain; its full sequence is MRVNNGLTPQELEAYGISDVHDIVYNPSYDLLYQEELDPSLTGYERGVLTNLGAVAVDTGIFTGRSPKDKYIVRDDTTRDTFWWADKGKGKNDNKPLSPETWQHLKGLVTKQLSGKRLFVVDAFCGANPDTRLSVRFITEVAWQAHFVKNMFIRPSDEELAGFKPDFIVMNGAKCTNPQWKEQGLNSENFVAFNLTERMQLIGGTWYGGEMKKGMFSMMNYLLPLKGIASMHCSANVSEKGDVAVFFGLSGTGKTTLSTDPKRRLIGDDEHGWDDDGVFNFEGGCYAKTIKLSKEAEPEIYNAIRRDALLENVTVREDGTIDFDDGSKTENTRVSYPIYHIDNIVKPVSKAGHATKVIFLTADAFGVLPPVSRLTADQTQYHFLSGFTAKLAGTERGITEPTPTFSACFGAAFLSLHPTQYAEVLVKRMQAAGAQAYLVNTGWNGTGKRISIKDTRAIIDAILNGSLDNAETFTLPMFNLAIPTELPGVDTKILDPRNTYASPEQWQEKAETLAKLFIDNFDKYTDTPAGAALVAAGPKL.

Arg-65 is a binding site for substrate. At Lys-87 the chain carries N6-acetyllysine. 2 residues coordinate substrate: Tyr-207 and Lys-213. ATP contacts are provided by residues Lys-213, His-232, and 248–256 (GLSGTGKTT). Mn(2+) contacts are provided by Lys-213 and His-232. Residue Asp-269 participates in Mn(2+) binding. Residues Glu-297, Arg-333, 449-450 (RI), and Thr-455 contribute to the ATP site. Arg-333 serves as a coordination point for substrate. An N6-acetyllysine modification is found at Lys-523.

Belongs to the phosphoenolpyruvate carboxykinase (ATP) family. Monomer. Mn(2+) serves as cofactor.

The protein localises to the cytoplasm. It carries out the reaction oxaloacetate + ATP = phosphoenolpyruvate + ADP + CO2. Its pathway is carbohydrate biosynthesis; gluconeogenesis. Functionally, involved in the gluconeogenesis. Catalyzes the conversion of oxaloacetate (OAA) to phosphoenolpyruvate (PEP) through direct phosphoryl transfer between the nucleoside triphosphate and OAA. This is Phosphoenolpyruvate carboxykinase (ATP) from Escherichia coli O157:H7.